Consider the following 339-residue polypeptide: MRSKIKLSLIANKTSRRTTFRKRKGGITNKLHELTTLCGVKACAVISSPYENPVVWPSTEGVQEAVSMFMERPATEQSKLMMSHETYLQDKITKETKKLESLRRENRESQLRQFMFDCVEGKMSEHQYGARDLQDLSLYIDHYINQLNSSVMLLTNNGASSSSFPPPLHTSVAGAGAGAGAAPLVVAGAGAAPLAVAGAGASPLAVAGVGAAPLAVAGAGPPMAQNQYEPIQPYIPTAFSDNIQYQAPVDFNHQIQHGIYDNLSLDPNHQYPFQDDPFMEMLMEYPYEQVGYAAEHAHIPFMNGNYYNYHQPPTVGLTTTGHMPSNNATTTTTTNTTVV.

One can recognise an MADS-box domain in the interval 1–60; that stretch reads MRSKIKLSLIANKTSRRTTFRKRKGGITNKLHELTTLCGVKACAVISSPYENPVVWPSTE. Positions 86 to 112 form a coiled coil; that stretch reads TYLQDKITKETKKLESLRRENRESQLR.

As to quaternary structure, interacts with AGL61/DIANA and AGL62.

The protein localises to the nucleus. Its function is as follows. Probable transcription factor. The polypeptide is Agamous-like MADS-box protein AGL86 (AGL86) (Arabidopsis thaliana (Mouse-ear cress)).